Here is a 240-residue protein sequence, read N- to C-terminus: Hairy and enhancer of split-related protein HELT (240 aa).

The bHLH domain maps to 10-65 (RTPVSHKVIEKRRRDRINRCLNELGKTVPMALAKQSSGKLEKAEILEMTVQYLRAL). Lys-48 carries the post-translational modification N6-acetyllysine. Positions 86 to 121 (FHYGYHECMKNLVHYLTTVERMETKDTKYARILAFL) constitute an Orange domain.

Belongs to the HEY family. In terms of assembly, self-associates. Interacts with HES5 and HEY2. As to expression, expressed in heart and testis.

The protein resides in the nucleus. Transcriptional repressor which binds preferentially to the canonical E box sequence 5'-CACGCG-3'. Required for the development of GABAergic neurons. This is Hairy and enhancer of split-related protein HELT (Helt) from Mus musculus (Mouse).